The sequence spans 509 residues: 5-OH-xanthotoxin synthase (509 aa).

A helical transmembrane segment spans residues 5-25 (AVVILLILAFPIASVYVLFYH). The substrate specificity stretch occupies residues 368–373 (TGALLI). Residue Cys-449 coordinates heme.

The protein belongs to the cytochrome P450 family. Requires heme as cofactor.

Its subcellular location is the microsome membrane. The enzyme catalyses xanthotoxin + reduced [NADPH--hemoprotein reductase] + O2 = 5-hydroxyxanthotoxin + oxidized [NADPH--hemoprotein reductase] + H2O + 2 H(+). The protein operates within secondary metabolite biosynthesis. Its function is as follows. Involved in the biosynthesis of coumarins and furanocoumarins (FCs), natural products required for defense responses against attacks by predators with potential medical and agroindustrial usages such as anticoagulant, rodenticide and artificial vanilla substitutes. Catalyzes the conversion of xanthotoxin into 5-hydroxyxanthotoxin. The protein is 5-OH-xanthotoxin synthase of Ammi majus (Bishop's weed).